A 280-amino-acid chain; its full sequence is Acyl-[acyl-carrier-protein]--UDP-N-acetylglucosamine O-acyltransferase (280 aa).

Belongs to the transferase hexapeptide repeat family. LpxA subfamily. Homotrimer.

Its subcellular location is the cytoplasm. It catalyses the reaction a (3R)-hydroxyacyl-[ACP] + UDP-N-acetyl-alpha-D-glucosamine = a UDP-3-O-[(3R)-3-hydroxyacyl]-N-acetyl-alpha-D-glucosamine + holo-[ACP]. The protein operates within glycolipid biosynthesis; lipid IV(A) biosynthesis; lipid IV(A) from (3R)-3-hydroxytetradecanoyl-[acyl-carrier-protein] and UDP-N-acetyl-alpha-D-glucosamine: step 1/6. Involved in the biosynthesis of lipid A, a phosphorylated glycolipid that anchors the lipopolysaccharide to the outer membrane of the cell. This is Acyl-[acyl-carrier-protein]--UDP-N-acetylglucosamine O-acyltransferase from Chlamydia muridarum (strain MoPn / Nigg).